Here is a 454-residue protein sequence, read N- to C-terminus: Chromosomal replication initiator protein DnaA (454 aa).

Residues 1–74 (MFDLEKFWDS…IQSAYAYAGI (74 aa)) form a domain I, interacts with DnaA modulators region. Positions 74–116 (IDIYPVFVVKNGPTPSSERMLEPQPQAKPEKARPQGREFTKDL) are domain II. Positions 88–112 (PSSERMLEPQPQAKPEKARPQGREF) are disordered. Over residues 101 to 112 (KPEKARPQGREF) the composition is skewed to basic and acidic residues. The domain III, AAA+ region stretch occupies residues 117–333 (RLNEKYTFEN…GALVKVQAQA (217 aa)). The ATP site is built by Gly161, Gly163, Lys164, and Thr165. The domain IV, binds dsDNA stretch occupies residues 334-454 (TIQKQDINIG…VSDLRQMLER (121 aa)).

Belongs to the DnaA family. In terms of assembly, oligomerizes as a right-handed, spiral filament on DNA at oriC.

The protein localises to the cytoplasm. In terms of biological role, plays an essential role in the initiation and regulation of chromosomal replication. ATP-DnaA binds to the origin of replication (oriC) to initiate formation of the DNA replication initiation complex once per cell cycle. Binds the DnaA box (a 9 base pair repeat at the origin) and separates the double-stranded (ds)DNA. Forms a right-handed helical filament on oriC DNA; dsDNA binds to the exterior of the filament while single-stranded (ss)DNA is stabiized in the filament's interior. The ATP-DnaA-oriC complex binds and stabilizes one strand of the AT-rich DNA unwinding element (DUE), permitting loading of DNA polymerase. After initiation quickly degrades to an ADP-DnaA complex that is not apt for DNA replication. Binds acidic phospholipids. In Lactobacillus delbrueckii subsp. bulgaricus (strain ATCC 11842 / DSM 20081 / BCRC 10696 / JCM 1002 / NBRC 13953 / NCIMB 11778 / NCTC 12712 / WDCM 00102 / Lb 14), this protein is Chromosomal replication initiator protein DnaA.